Reading from the N-terminus, the 65-residue chain is DNA gyrase inhibitor YacG (65 aa).

Zn(2+) contacts are provided by cysteine 8, cysteine 11, cysteine 27, and cysteine 31. The disordered stretch occupies residues 43–65; sequence SYRIPDTGKDSEKQENDPSGSEK. Basic and acidic residues predominate over residues 48 to 65; sequence DTGKDSEKQENDPSGSEK.

Belongs to the DNA gyrase inhibitor YacG family. As to quaternary structure, interacts with GyrB. It depends on Zn(2+) as a cofactor.

Inhibits all the catalytic activities of DNA gyrase by preventing its interaction with DNA. Acts by binding directly to the C-terminal domain of GyrB, which probably disrupts DNA binding by the gyrase. The chain is DNA gyrase inhibitor YacG from Nitrosospira multiformis (strain ATCC 25196 / NCIMB 11849 / C 71).